We begin with the raw amino-acid sequence, 451 residues long: L,D-transpeptidase 5 (451 aa).

The 122-residue stretch at 263–384 (QVVKAEVSSH…AVYGDPVEVT (122 aa)) folds into the L,D-TPase catalytic domain. Residues Tyr-323 and 337 to 338 (NG) each bind substrate. His-342 serves as the catalytic Proton donor/acceptor. The Nucleophile role is filled by Cys-360. Asn-362 provides a ligand contact to substrate. The tract at residues 417-451 (AAKPAATQIPVTAPVTPSDAPTPSGTPTTTNGPGG) is disordered. A compositionally biased stretch (low complexity) spans 437-451 (PTPSGTPTTTNGPGG).

Its pathway is cell wall biogenesis; peptidoglycan biosynthesis. Its activity is regulated as follows. In contrast to other LDT paralogs, LdtMt5 is not inactivated by the beta-lactam carbapenems; beta-lactam carbapenems form covalent adducts with other LDT paralogs but the formation of covalent adducts was not detected for LdtMt5. Functionally, generates 3-&gt;3 cross-links in peptidoglycan, catalyzing the cleavage of the mDap(3)-D-Ala(4) bond of a tetrapeptide donor stem and the formation of a bond between the carbonyl of mDap(3) of the donor stem and the side chain of mDap(3) of the acceptor stem. Is specific for donor substrates containing a stem tetrapeptide since it cannot use pentapeptide stems. The polypeptide is L,D-transpeptidase 5 (lprQ) (Mycobacterium tuberculosis (strain ATCC 25618 / H37Rv)).